Reading from the N-terminus, the 297-residue chain is T-cell leukemia homeobox protein 1 (297 aa).

The tract at residues 153 to 174 (DRFTGHPYQNRTPPKKKKPRTS) is disordered. A DNA-binding region (homeobox) is located at residues 168-227 (KKKPRTSFTRLQICELEKRFHRQKYLASAERAALAKALKMTDAQVKTWFQNRRTKWRRQT).

The protein resides in the nucleus. Seems to be involved in the development of cranial sensory innervation from peripheral ganglia. The chain is T-cell leukemia homeobox protein 1 (TLX1) from Gallus gallus (Chicken).